The sequence spans 443 residues: C4-dicarboxylate transport protein (443 aa).

Transmembrane regions (helical) follow at residues 17–37, 57–77, 92–112, 139–159, 161–181, 201–221, 234–254, 320–340, and 368–388; these read PFYS…ILLG, LVKM…IAGM, LYFL…ANVV, EQSI…GAFA, GDIL…AMVG, LVGI…AFTI, MLIG…LGAV, IYMT…LSWG, and AATL…ILGI.

This sequence belongs to the dicarboxylate/amino acid:cation symporter (DAACS) (TC 2.A.23) family.

Its subcellular location is the cell inner membrane. Responsible for the transport of dicarboxylates such as succinate, fumarate, and malate from the periplasm across the membrane. The polypeptide is C4-dicarboxylate transport protein (Rhizobium etli (strain ATCC 51251 / DSM 11541 / JCM 21823 / NBRC 15573 / CFN 42)).